We begin with the raw amino-acid sequence, 230 residues long: Dickkopf-like protein 1 (230 aa).

The first 20 residues, 1–20 (MCRLRVLLLLLPLAFVSSSA), serve as a signal peptide directing secretion. N-linked (GlcNAc...) asparagine glycosylation is found at N31, N87, and N102.

Interacts with SLXL1; Co-localize in seminiferous tubules. Interacts with SLY. Post-translationally, N-glycosylated during spermatogenesis. Not N-glycosylated in mature sperm. As to expression, testis-specific. Abundant in the seminiferous tubules where it is associated with developing spermatocytes. Expressed only in testis (at protein level). Not detectable on postnatal days 4 and 9 but after day 18 it gradually increased as the development of testes progressed. Expressed at high levels in testis and at weak levels in epididymis.

Its subcellular location is the secreted. It localises to the cytoplasmic vesicle. The protein localises to the secretory vesicle. The protein resides in the acrosome. Involved in fertilization by facilitating sperm penetration of the zona pellucida. May promote spermatocyte apoptosis, thereby limiting sperm production. In adults, may reduce testosterone synthesis in Leydig cells. Is not essential either for development or fertility. The chain is Dickkopf-like protein 1 from Mus musculus (Mouse).